The following is a 1249-amino-acid chain: Protein lingerer (1249 aa).

The disordered stretch occupies residues Met-1–Glu-66. 2 stretches are compositionally biased toward gly residues: residues Ser-7 to Gly-30 and Gly-38 to Gly-50. Residues Lys-84–Thr-124 enclose the UBA domain. 10 disordered regions span residues Thr-132–Glu-312, Ser-350–Val-375, Met-454–Thr-506, Tyr-549–Met-579, Thr-616–Ser-717, Pro-738–Ile-922, Gly-1016–Gly-1042, Gln-1124–Met-1149, Lys-1164–Thr-1186, and Gln-1211–Asn-1249. Residues Asn-186–Asp-209 show a composition bias toward gly residues. Positions Gly-210–Gly-227 are enriched in basic and acidic residues. 2 stretches are compositionally biased toward gly residues: residues Glu-228–Gly-240 and Asp-248–Arg-269. The span at Ser-350–Pro-369 shows a compositional bias: low complexity. Positions Met-457–Pro-494 are enriched in polar residues. 3 stretches are compositionally biased toward low complexity: residues Tyr-549–Val-559, Thr-616–Val-639, and Gln-647–Gln-664. Over residues Ala-678–Arg-705 the composition is skewed to polar residues. The span at Thr-706 to Ser-717 shows a compositional bias: low complexity. 2 stretches are compositionally biased toward polar residues: residues Pro-738 to Tyr-769 and Gly-777 to Ala-809. The segment covering Gln-811 to Ser-861 has biased composition (low complexity). A compositionally biased stretch (polar residues) spans Gln-862–Pro-873. Low complexity-rich tracts occupy residues Ser-874–Asn-884, Asn-892–Ile-922, and Asn-1023–Ser-1034. A compositionally biased stretch (polar residues) spans Gln-1124–Gly-1138. Polar residues predominate over residues Asp-1216–Asn-1249.

The protein resides in the cytoplasm. In terms of biological role, acts in the nervous system to mediate the control of copulatory organs during courtship. This is Protein lingerer from Anopheles gambiae (African malaria mosquito).